The sequence spans 318 residues: Type II methyltransferase M.HaeII (318 aa).

The region spanning Tyr-4–Ala-304 is the SAM-dependent MTase C5-type domain. Cys-73 is an active-site residue.

The protein belongs to the class I-like SAM-binding methyltransferase superfamily. C5-methyltransferase family.

It catalyses the reaction a 2'-deoxycytidine in DNA + S-adenosyl-L-methionine = a 5-methyl-2'-deoxycytidine in DNA + S-adenosyl-L-homocysteine + H(+). Its function is as follows. A methylase, recognizes the double-stranded sequence 5'-RGCGCY-3', methylates C-? on both strands, and protects the DNA from cleavage by the HaeII endonuclease. The protein is Type II methyltransferase M.HaeII (haeIIM) of Haemophilus aegyptius.